Here is a 445-residue protein sequence, read N- to C-terminus: Probable carboxypeptidase UREG_07869 (445 aa).

Positions 1-17 (MKSLILTTLALLPLVSC) are cleaved as a signal peptide. Aspartate 165 provides a ligand contact to Zn(2+). The Proton acceptor role is filled by glutamate 197. Zn(2+) is bound at residue glutamate 198.

It belongs to the peptidase M20A family. Zn(2+) serves as cofactor.

It is found in the secreted. The chain is Probable carboxypeptidase UREG_07869 from Uncinocarpus reesii (strain UAMH 1704).